We begin with the raw amino-acid sequence, 231 residues long: Protein virC1 (231 aa).

This is Protein virC1 (virC1) from Rhizobium radiobacter (Agrobacterium tumefaciens).